The chain runs to 517 residues: Tyrosine-protein kinase Fgr (517 aa).

Gly-2 carries N-myristoyl glycine lipidation. 2 S-palmitoyl cysteine lipidation sites follow: Cys-3 and Cys-6. Position 13 is a phosphoserine (Ser-13). Position 32 is a phosphotyrosine (Tyr-32). Position 50 is a phosphoserine (Ser-50). One can recognise an SH3 domain in the interval 65–126 (TGVTIFVALY…PSNYVAPVDS (62 aa)). The interaction with CLNK stretch occupies residues 102-103 (WW). Residues 132 to 229 (WYFGKISRKD…GLCYLLTAPC (98 aa)) enclose the SH2 domain. The residue at position 196 (Tyr-196) is a Phosphotyrosine. Ser-206 is modified (phosphoserine). The Protein kinase domain occupies 251–504 (IALERRLGTG…YLQSFLEDYF (254 aa)). ATP is bound by residues 257–265 (LGTGCFGDV) and Lys-279. The active-site Proton acceptor is the Asp-370. Tyr-400 carries the phosphotyrosine modification. Tyr-511 is subject to Phosphotyrosine; by SRC.

This sequence belongs to the protein kinase superfamily. Tyr protein kinase family. SRC subfamily. In terms of assembly, interacts with ITGB1, ITGB2, MS4A2/FCER1B, FCER1G and FCGR2. Interacts (via SH2 domain) with SYK (tyrosine phosphorylated). Interacts (via SH2 domain) with FLT3 (tyrosine phosphorylated). Interacts with PTK2/FAK1. Interacts (via SH2 domain) with HCLS1 (tyrosine phosphorylated by SYK). Interacts with SIRPA and PTPNS1. Interacts (not phosphorylated on tyrosine residues) with CBL; FGR tyrosine phosphorylation promotes dissociation. Interacts with CLNK. Ubiquitinated. Becomes ubiquitinated in response to ITGB2 signaling; this does not lead to degradation. In terms of processing, phosphorylated. Autophosphorylated on tyrosine residues. Becomes phosphorylated in response to FCGR2 engagement, cell adhesion and signaling by ITGB2. Prior phosphorylation at Tyr-511 by SRC inhibits ulterior autophosphorylation at Tyr-400. In terms of tissue distribution, expressed in natural killer cells (at protein level).

It localises to the cell membrane. It is found in the cell projection. Its subcellular location is the ruffle membrane. The protein resides in the cytoplasm. The protein localises to the cytosol. It localises to the cytoskeleton. It is found in the mitochondrion inner membrane. Its subcellular location is the mitochondrion intermembrane space. It catalyses the reaction L-tyrosyl-[protein] + ATP = O-phospho-L-tyrosyl-[protein] + ADP + H(+). Activated by autophosphorylation. Prior phosphorylation at Tyr-511 by SRC inhibits ulterior autophosphorylation at Tyr-400. Activated by phorbol myristate acetate, phosphatidic acid and poly-Lys. Binding (via SH2 domain) of HCLS1 that is already phosphorylated by SYK strongly increases kinase activity. Functionally, non-receptor tyrosine-protein kinase that transmits signals from cell surface receptors devoid of kinase activity and contributes to the regulation of immune responses, including neutrophil, monocyte, macrophage and mast cell functions, cytoskeleton remodeling in response to extracellular stimuli, phagocytosis, cell adhesion and migration. Promotes mast cell degranulation, release of inflammatory cytokines and IgE-mediated anaphylaxis. Acts downstream of receptors that bind the Fc region of immunoglobulins, such as MS4A2/FCER1B, FCER1G and FCGR2. Acts downstream of ITGB1 and ITGB2, and regulates actin cytoskeleton reorganization, cell spreading and adhesion. Depending on the context, activates or inhibits cellular responses. Functions as a negative regulator of ITGB2 signaling, phagocytosis and SYK activity in monocytes. Required for normal ITGB1 and ITGB2 signaling, normal cell spreading and adhesion in neutrophils and macrophages. Functions as a positive regulator of cell migration and regulates cytoskeleton reorganization via RAC1 activation. Phosphorylates SYK (in vitro) and promotes SYK-dependent activation of AKT1 and MAP kinase signaling. Phosphorylates PLD2 in antigen-stimulated mast cells, leading to PLD2 activation and the production of the signaling molecules lysophosphatidic acid and diacylglycerol. Promotes activation of PIK3R1. Phosphorylates FASLG, and thereby regulates its ubiquitination and subsequent internalization. Phosphorylates ABL1. Promotes phosphorylation of CBL, CTTN, PIK3R1, PTK2/FAK1, PTK2B/PYK2 and VAV2. Phosphorylates HCLS1 that has already been phosphorylated by SYK, but not unphosphorylated HCLS1. Together with CLNK, it acts as a negative regulator of natural killer cell-activating receptors and inhibits interferon-gamma production. The protein is Tyrosine-protein kinase Fgr (Fgr) of Mus musculus (Mouse).